Reading from the N-terminus, the 275-residue chain is Shikimate dehydrogenase (NADP(+)) (275 aa).

Shikimate contacts are provided by residues 15–17 (SKS) and Thr-62. Lys-66 serves as the catalytic Proton acceptor. Glu-78 contributes to the NADP(+) binding site. Shikimate is bound by residues Asn-87 and Asp-102. Residues 127-131 (GAGGA), 151-156 (NRTPQK), and Met-215 each bind NADP(+). A shikimate-binding site is contributed by Tyr-217. Residue Gly-239 participates in NADP(+) binding.

Belongs to the shikimate dehydrogenase family. Homodimer.

The catalysed reaction is shikimate + NADP(+) = 3-dehydroshikimate + NADPH + H(+). It participates in metabolic intermediate biosynthesis; chorismate biosynthesis; chorismate from D-erythrose 4-phosphate and phosphoenolpyruvate: step 4/7. Its function is as follows. Involved in the biosynthesis of the chorismate, which leads to the biosynthesis of aromatic amino acids. Catalyzes the reversible NADPH linked reduction of 3-dehydroshikimate (DHSA) to yield shikimate (SA). This chain is Shikimate dehydrogenase (NADP(+)), found in Nitrosospira multiformis (strain ATCC 25196 / NCIMB 11849 / C 71).